Reading from the N-terminus, the 40-residue chain is Chaperonin HSP60, mitochondrial (40 aa).

Belongs to the chaperonin (HSP60) family.

Its subcellular location is the mitochondrion. Functionally, implicated in mitochondrial protein import and macromolecular assembly. May facilitate the correct folding of imported proteins. May also prevent misfolding and promote the refolding and proper assembly of unfolded polypeptides generated under stress conditions in the mitochondrial matrix. The protein is Chaperonin HSP60, mitochondrial of Solanum tuberosum (Potato).